We begin with the raw amino-acid sequence, 104 residues long: L-rhamnose mutarotase (104 aa).

A substrate-binding site is contributed by Tyr18. His22 functions as the Proton donor in the catalytic mechanism. Residues Tyr41 and 76–77 (WW) contribute to the substrate site.

It belongs to the rhamnose mutarotase family. Homodimer.

The protein localises to the cytoplasm. The enzyme catalyses alpha-L-rhamnose = beta-L-rhamnose. It functions in the pathway carbohydrate metabolism; L-rhamnose metabolism. Involved in the anomeric conversion of L-rhamnose. This is L-rhamnose mutarotase from Yersinia pseudotuberculosis serotype O:1b (strain IP 31758).